The primary structure comprises 46 residues: MAKGKRTFQPNNRRRARVHGFRLRMRNSGRAIVSGRRRKGRRALSA.

Belongs to the bacterial ribosomal protein bL34 family.

This chain is Large ribosomal subunit protein bL34 (rpmH), found in Mycobacterium avium.